A 269-amino-acid chain; its full sequence is Cleavage and polyadenylation specificity factor subunit 4 (269 aa).

5 C3H1-type zinc fingers span residues 35–61, 62–89, 90–117, 118–142, and 143–169; these read KSGAAVCEFFLKAACGKGGMCPFRHIS, GEKTVVCKHWLRGLCKKGDQCEFLHEYD, MTKMPECYFYSKFGECSNKECPFLHIDP, ESKIKDCPWYDRGFCKHGPLCRHRH, and TRRVICVNYLVGFCPEGPSCKFMHPRF. The segment at 173–199 is disordered; it reads MGTTEQPPLPQQTQPPAKQSNNPPLQR. A phosphoserine mark is found at S200, S202, and S212. The CCHC-type zinc finger occupies 243–260; the sequence is VTCYKCGEKGHYANRCTK. Phosphoserine is present on S267.

It belongs to the CPSF4/YTH1 family. Component of the cleavage and polyadenylation specificity factor (CPSF) complex, composed of CPSF1, CPSF2, CPSF3, CPSF4 and FIP1L1. Interacts with FIP1L1. As to quaternary structure, (Microbial infection) Interacts with influenza A virus NS1 blocks processing of pre-mRNAs, thereby preventing nuclear export of host cell mRNAs.

The protein resides in the nucleus. Component of the cleavage and polyadenylation specificity factor (CPSF) complex that play a key role in pre-mRNA 3'-end formation, recognizing the AAUAAA signal sequence and interacting with poly(A) polymerase and other factors to bring about cleavage and poly(A) addition. CPSF4 binds RNA polymers with a preference for poly(U). The polypeptide is Cleavage and polyadenylation specificity factor subunit 4 (CPSF4) (Homo sapiens (Human)).